The chain runs to 168 residues: Protein-export protein SecB (168 aa).

The protein belongs to the SecB family. Homotetramer, a dimer of dimers. One homotetramer interacts with 1 SecA dimer.

It localises to the cytoplasm. Its function is as follows. One of the proteins required for the normal export of preproteins out of the cell cytoplasm. It is a molecular chaperone that binds to a subset of precursor proteins, maintaining them in a translocation-competent state. It also specifically binds to its receptor SecA. The chain is Protein-export protein SecB from Sinorhizobium medicae (strain WSM419) (Ensifer medicae).